A 200-amino-acid polypeptide reads, in one-letter code: Holliday junction branch migration complex subunit RuvA (200 aa).

A domain I region spans residues 1–64; the sequence is MIAKLKGLLD…ENDMRLLGFA (64 aa). The domain II stretch occupies residues 65-143; the sequence is EASERDWFRL…ALPSAPGGAA (79 aa). Residues 144 to 154 form a flexible linker region; that stretch reads MAANPAGGASA. A domain III region spans residues 154 to 200; that stretch reads ADAVSALENLGFKPAIAARAVATAQGELGEGASESELIRVALKRAAG.

It belongs to the RuvA family. Homotetramer. Forms an RuvA(8)-RuvB(12)-Holliday junction (HJ) complex. HJ DNA is sandwiched between 2 RuvA tetramers; dsDNA enters through RuvA and exits via RuvB. An RuvB hexamer assembles on each DNA strand where it exits the tetramer. Each RuvB hexamer is contacted by two RuvA subunits (via domain III) on 2 adjacent RuvB subunits; this complex drives branch migration. In the full resolvosome a probable DNA-RuvA(4)-RuvB(12)-RuvC(2) complex forms which resolves the HJ.

It localises to the cytoplasm. In terms of biological role, the RuvA-RuvB-RuvC complex processes Holliday junction (HJ) DNA during genetic recombination and DNA repair, while the RuvA-RuvB complex plays an important role in the rescue of blocked DNA replication forks via replication fork reversal (RFR). RuvA specifically binds to HJ cruciform DNA, conferring on it an open structure. The RuvB hexamer acts as an ATP-dependent pump, pulling dsDNA into and through the RuvAB complex. HJ branch migration allows RuvC to scan DNA until it finds its consensus sequence, where it cleaves and resolves the cruciform DNA. In Erythrobacter litoralis (strain HTCC2594), this protein is Holliday junction branch migration complex subunit RuvA.